The chain runs to 91 residues: Small ribosomal subunit protein uS19 (91 aa).

The protein belongs to the universal ribosomal protein uS19 family.

In terms of biological role, protein S19 forms a complex with S13 that binds strongly to the 16S ribosomal RNA. In Prochlorococcus marinus (strain SARG / CCMP1375 / SS120), this protein is Small ribosomal subunit protein uS19.